We begin with the raw amino-acid sequence, 117 residues long: Immunoglobulin kappa variable 1-12 (117 aa).

The signal sequence occupies residues Met1–Cys22. Residues Asp23 to Cys45 are framework-1. An Ig-like domain is found at Ile24–Pro117. Cys45 and Cys110 are joined by a disulfide. The segment at Arg46–Ala56 is complementarity-determining-1. Residues Trp57–Tyr71 are framework-2. The tract at residues Ala72–Ser78 is complementarity-determining-2. The interval Gly79–Cys110 is framework-3. The segment at Gln111–Pro117 is complementarity-determining-3.

Immunoglobulins are composed of two identical heavy chains and two identical light chains; disulfide-linked.

The protein resides in the secreted. The protein localises to the cell membrane. Functionally, v region of the variable domain of immunoglobulin light chains that participates in the antigen recognition. Immunoglobulins, also known as antibodies, are membrane-bound or secreted glycoproteins produced by B lymphocytes. In the recognition phase of humoral immunity, the membrane-bound immunoglobulins serve as receptors which, upon binding of a specific antigen, trigger the clonal expansion and differentiation of B lymphocytes into immunoglobulins-secreting plasma cells. Secreted immunoglobulins mediate the effector phase of humoral immunity, which results in the elimination of bound antigens. The antigen binding site is formed by the variable domain of one heavy chain, together with that of its associated light chain. Thus, each immunoglobulin has two antigen binding sites with remarkable affinity for a particular antigen. The variable domains are assembled by a process called V-(D)-J rearrangement and can then be subjected to somatic hypermutations which, after exposure to antigen and selection, allow affinity maturation for a particular antigen. The sequence is that of Immunoglobulin kappa variable 1-12 from Homo sapiens (Human).